Here is a 366-residue protein sequence, read N- to C-terminus: Sec-independent protein translocase protein TatC (366 aa).

Helical transmembrane passes span 42–62, 70–90, 97–117, 134–154, 179–199, 207–227, and 230–250; these read VLAV…LFTM, HMPA…FIPL, AVFI…APGL, ILFY…VFGF, LFFA…LVIV, LAGF…ILTP, and VLSQ…GLFV. The segment covering 266–279 has biased composition (acidic residues); sequence EAEESGAADDESDE. A disordered region spans residues 266–366; that stretch reads EAEESGAADD…PSPKKPDSPV (101 aa). Composition is skewed to basic and acidic residues over residues 281–290 and 301–318; these read VSARHAEYEA and DMDK…RLES. Residues 319 to 333 are compositionally biased toward polar residues; the sequence is DSSASDDGPESNTAG.

It belongs to the TatC family. As to quaternary structure, the Tat system comprises two distinct complexes: a TatABC complex, containing multiple copies of TatA, TatB and TatC subunits, and a separate TatA complex, containing only TatA subunits. Substrates initially bind to the TatABC complex, which probably triggers association of the separate TatA complex to form the active translocon.

The protein localises to the cell inner membrane. Its function is as follows. Part of the twin-arginine translocation (Tat) system that transports large folded proteins containing a characteristic twin-arginine motif in their signal peptide across membranes. Together with TatB, TatC is part of a receptor directly interacting with Tat signal peptides. This is Sec-independent protein translocase protein TatC from Halothiobacillus neapolitanus (strain ATCC 23641 / c2) (Thiobacillus neapolitanus).